Reading from the N-terminus, the 405-residue chain is Tyrosine-protein phosphatase non-receptor type eak-6 (405 aa).

The Tyrosine-protein phosphatase domain occupies 30–309 (INQRINIIAD…SFIYDIIIKY (280 aa)). The active-site Phosphocysteine intermediate is the cysteine 248.

This sequence belongs to the protein-tyrosine phosphatase family. In terms of tissue distribution, expressed in the 2 embryonic head hypodermal cells XXXL/R.

The protein resides in the cytoplasm. The protein localises to the cell membrane. It carries out the reaction O-phospho-L-tyrosyl-[protein] + H2O = L-tyrosyl-[protein] + phosphate. Functionally, putative phosphatase which, together with eak-4 and sdf-9, negatively regulates dauer larva formation downstream of insulin-like receptor daf-2 and in parallel of age-1, pdk-1 and akt-1. This chain is Tyrosine-protein phosphatase non-receptor type eak-6, found in Caenorhabditis elegans.